Here is a 298-residue protein sequence, read N- to C-terminus: Inosose dehydratase (298 aa).

The protein belongs to the IolE/MocC family. Requires glutathione as cofactor. Co(2+) serves as cofactor. Mn(2+) is required as a cofactor.

It catalyses the reaction scyllo-inosose = 3D-3,5/4-trihydroxycyclohexane-1,2-dione + H2O. It participates in polyol metabolism; myo-inositol degradation into acetyl-CoA; acetyl-CoA from myo-inositol: step 2/7. Catalyzes the dehydration of inosose (2-keto-myo-inositol, 2KMI or 2,4,6/3,5-pentahydroxycyclohexanone) to 3D-(3,5/4)-trihydroxycyclohexane-1,2-dione (D-2,3-diketo-4-deoxy-epi-inositol). The polypeptide is Inosose dehydratase (Bacillus cereus (strain AH820)).